Reading from the N-terminus, the 562-residue chain is Glutamine--tRNA ligase (562 aa).

The short motif at 35 to 45 (PEPNGYLHIGH) is the 'HIGH' region element. ATP contacts are provided by residues 36–38 (EPN) and 42–48 (HIGHAKS). Positions 68 and 213 each coordinate L-glutamine. ATP is bound by residues T232, 262 to 263 (RL), and 270 to 272 (LSK). A 'KMSKS' region motif is present at residues 269-273 (ILSKR).

This sequence belongs to the class-I aminoacyl-tRNA synthetase family. Monomer.

The protein localises to the cytoplasm. The enzyme catalyses tRNA(Gln) + L-glutamine + ATP = L-glutaminyl-tRNA(Gln) + AMP + diphosphate. The polypeptide is Glutamine--tRNA ligase (Buchnera aphidicola subsp. Schizaphis graminum (strain Sg)).